The following is a 453-amino-acid chain: UDP-N-acetylmuramoylalanine--D-glutamate ligase (453 aa).

115–121 (GTNGKTT) provides a ligand contact to ATP.

Belongs to the MurCDEF family.

The protein localises to the cytoplasm. It carries out the reaction UDP-N-acetyl-alpha-D-muramoyl-L-alanine + D-glutamate + ATP = UDP-N-acetyl-alpha-D-muramoyl-L-alanyl-D-glutamate + ADP + phosphate + H(+). It participates in cell wall biogenesis; peptidoglycan biosynthesis. Functionally, cell wall formation. Catalyzes the addition of glutamate to the nucleotide precursor UDP-N-acetylmuramoyl-L-alanine (UMA). This chain is UDP-N-acetylmuramoylalanine--D-glutamate ligase, found in Geotalea daltonii (strain DSM 22248 / JCM 15807 / FRC-32) (Geobacter daltonii).